Here is a 1083-residue protein sequence, read N- to C-terminus: Regulator of the glycerol channel 1 (1083 aa).

Disordered regions lie at residues 1-46 (MSDY…GSSD) and 69-89 (LKNE…KENK). Polar residues predominate over residues 13–31 (GGISKQPATPGSTRSSSRN). Phosphoserine occurs at positions 136, 249, 252, 481, and 537. Residues 495–606 (CIRVGYLLKK…DCSLKDSTDS (112 aa)) enclose the PH domain. A disordered region spans residues 534–582 (DSKSPRSKNKPVVEQSDISRVNKDGTNAGSHPSSKGTQDPKLTKRRKGL). Polar residues predominate over residues 549 to 570 (SDISRVNKDGTNAGSHPSSKGT). Ser652, Ser765, and Ser813 each carry phosphoserine. Phosphothreonine occurs at positions 817 and 857. 6 positions are modified to phosphoserine: Ser866, Ser879, Ser918, Ser966, Ser969, and Ser975. Positions 979–1083 (EENRTQNCSG…TVPATSASSK (105 aa)) are disordered. Polar residues-rich tracts occupy residues 983–992 (TQNCSGSRKS), 1043–1061 (LKKT…VSND), and 1071–1083 (STNT…ASSK). A phosphoserine mark is found at Ser1059, Ser1081, and Ser1082.

Belongs to the RGC1 family.

The protein localises to the cytoplasm. Its function is as follows. Positive regulator of FPS1 glycerol channel required for the glycerol efflux. The sequence is that of Regulator of the glycerol channel 1 (RGC1) from Saccharomyces cerevisiae (strain ATCC 204508 / S288c) (Baker's yeast).